The following is a 308-amino-acid chain: Putative mitochondrial transporter UCP3 (308 aa).

At 1–10 (MVGLQPSEVP) the chain is on the mitochondrial intermembrane side. A helical membrane pass occupies residues 11 to 32 (PTTVVKFLGAGTAACFADLLTF). Solcar repeat units lie at residues 11–102 (PTTV…VKQF), 111–202 (SSVA…IKEK), and 211–296 (DNFP…LKRA). Residues 33–73 (PLDTAKVRLQIQGENPGAQSVQYRGVLGTILTMVRTEGPRS) lie on the Mitochondrial matrix side of the membrane. The chain crosses the membrane as a helical span at residues 74-96 (PYSGLVAGLHRQMSFASIRIGLY). The Mitochondrial intermembrane portion of the chain corresponds to 97–116 (DSVKQFYTPKGADHSSVAIR). The helical transmembrane segment at 117 to 133 (ILAGCTTGAMAVTCAQP) threads the bilayer. Over 134–179 (TDVVKVRFQAMIRLGTGGERKYRGTMDAYRTIAREEGVRGLWKGTW) the chain is Mitochondrial matrix. A helical membrane pass occupies residues 180 to 196 (PNITRNAIVNCAEMVTY). Residues 197 to 213 (DIIKEKLLESHLFTDNF) are Mitochondrial intermembrane-facing. Residues 214–233 (PCHFVSAFGAGFCATVVASP) form a helical membrane-spanning segment. The Mitochondrial matrix portion of the chain corresponds to 234-267 (VDVVKTRYMNAPLGRYRSPLHCMLKMVAQEGPTA). Residues 268-290 (FYKGFVPSFLRLGAWNVMMFVTY) form a helical membrane-spanning segment. The purine nucleotide binding stretch occupies residues 275-297 (SFLRLGAWNVMMFVTYEQLKRAL). At 291–308 (EQLKRALMKVQVLRESPF) the chain is on the mitochondrial intermembrane side.

It belongs to the mitochondrial carrier (TC 2.A.29) family. In terms of assembly, interacts with HAX1; the interaction is direct and calcium-dependent.

The protein localises to the mitochondrion inner membrane. Inhibited by purine nucleotides and inorganic phosphate (in vitro). Its function is as follows. Putative transmembrane transporter that plays a role in mitochondrial metabolism via an as yet unclear mechanism. Originally, this mitochondrial protein was thought to act as a proton transmembrane transporter from the mitochondrial intermembrane space into the matrix, causing proton leaks through the inner mitochondrial membrane, thereby uncoupling mitochondrial membrane potential generation from ATP synthesis. However, this function is controversial and uncoupling may not be the function, or at least not the main function, but rather a consequence of more conventional metabolite transporter activity. The sequence is that of Putative mitochondrial transporter UCP3 from Mus musculus (Mouse).